The following is a 640-amino-acid chain: EF-hand domain-containing protein 1 (640 aa).

The segment at 1–45 is required for its localization in the mitotic spindle and interaction with alpha-tubulin; it reads MVSNPVHGLPFLPGTSFKDSTKTAFHRSQTLSYRNGYAIVRRPTV. 3 DM10 domains span residues 93 to 198, 239 to 359, and 416 to 520; these read DKKV…ESQG, DKQV…KEKF, and DNKV…ESNA. Positions 535 to 554 are disordered; sequence VRKREAPAPEAESKQTEKDP. Residues 538-554 show a composition bias toward basic and acidic residues; that stretch reads REAPAPEAESKQTEKDP. The region spanning 574–609 is the EF-hand domain; it reads SCKDNIREAFQIYDKEASGYVDRDMFFKICESLNVP.

Microtubule inner protein component of sperm flagellar doublet microtubules. Interacts with the C-terminus of CACNA1E. Interacts with alpha-tubulin. As to expression, widely expressed. Not detected in lymphocytes.

The protein localises to the cytoplasm. It is found in the cytoskeleton. The protein resides in the cilium axoneme. It localises to the flagellum axoneme. Its subcellular location is the microtubule organizing center. The protein localises to the centrosome. It is found in the spindle. The protein resides in the spindle pole. In terms of biological role, microtubule inner protein (MIP) part of the dynein-decorated doublet microtubules (DMTs) in cilia axoneme, which is required for motile cilia beating. Microtubule-associated protein which regulates cell division and neuronal migration during cortical development. Necessary for radial and tangential cell migration during brain development, possibly acting as a regulator of cell morphology and process formation during migration. May enhance calcium influx through CACNA1E and stimulate programmed cell death. This Homo sapiens (Human) protein is EF-hand domain-containing protein 1.